The chain runs to 769 residues: 5-methyltetrahydropteroyltriglutamate--homocysteine methyltransferase (769 aa).

5-methyltetrahydropteroyltri-L-glutamate is bound by residues 16–19 and K118; that span reads RELK. L-homocysteine is bound by residues 440–442 and E493; that span reads IGS. L-methionine-binding positions include 440–442 and E493; that span reads IGS. 5-methyltetrahydropteroyltri-L-glutamate-binding positions include 524–525 and W570; that span reads RC. Residue D608 participates in L-homocysteine binding. D608 provides a ligand contact to L-methionine. E614 contributes to the 5-methyltetrahydropteroyltri-L-glutamate binding site. Zn(2+) contacts are provided by H650, C652, and E674. H706 functions as the Proton donor in the catalytic mechanism. C738 provides a ligand contact to Zn(2+).

Belongs to the vitamin-B12 independent methionine synthase family. Zn(2+) serves as cofactor.

The enzyme catalyses 5-methyltetrahydropteroyltri-L-glutamate + L-homocysteine = tetrahydropteroyltri-L-glutamate + L-methionine. It participates in amino-acid biosynthesis; L-methionine biosynthesis via de novo pathway; L-methionine from L-homocysteine (MetE route): step 1/1. In terms of biological role, catalyzes the transfer of a methyl group from 5-methyltetrahydrofolate to homocysteine resulting in methionine formation. This Acidiphilium cryptum (strain JF-5) protein is 5-methyltetrahydropteroyltriglutamate--homocysteine methyltransferase.